Reading from the N-terminus, the 238-residue chain is uncharacterized protein (238 aa).

3 consecutive transmembrane segments (helical) span residues 75–95 (YAIF…HNFY), 116–136 (IVLI…FSLI), and 172–192 (IQGL…LEVI). The interval 200 to 238 (DVEMSSMRGQAITTEPASDNTMAEETDCNTSKDVESGSN) is disordered. Residues 206 to 220 (MRGQAITTEPASDNT) are compositionally biased toward polar residues. A compositionally biased stretch (basic and acidic residues) spans 229–238 (TSKDVESGSN).

The protein resides in the membrane. This is an uncharacterized protein from Schizosaccharomyces pombe (strain 972 / ATCC 24843) (Fission yeast).